The sequence spans 776 residues: MQYSVATADGLSGPPSGAYTLPTFKFQPRRESIDWRRISAVDVDRVARELDVATLQENIAGVTFCNLDREVCNHCRQPVDPVLLKVLRLAQLIIEYLLHCQDCLSASVAQLEARLQASLGQQQRGQQELGRQADELKGVREESRRRRKMISTLQQLLLQTGAHSYHTCHLCDKTFMNATFLRGHIQRRHAGMAEVGKQKQEQQLGEVLEELRAKLKWTQGELEAQREAERQRQAQELEMIRQREIEAKKKFDEWKEKERSKLYGEIDKLKQLFWDEFKTVANQNSTLEEKLKVLQSYSMTESHLGSLRDEESEERLKHAQELQALREKMDIQKTEWKRKMKALHEERAAERRQLQEENERLHVTLSQDQKKAAAQSQRHINALRAQLQEQARLIESQEETIQTLSFRRMEEVQEVPKAVVTEEDSSEEELEASLEEQQEQRKVLAALRNNPAWLKQFRPILEDTLEEKLEGMGIKRGTKGISAQTVRRLEPLLRTQREQTARSFREFLSLREKLNQEVSSRAKKRWEGTAVVPQPDGQPPVKSQRTTLATREVRPKTRTLTVALPSKPAEPSTSTPRGHSSHGPGLTQVSTPIPRPRVHGPSSTPVSPGPGLSTPPFSSEEEPEGDVVQRVSLQPPKVLPRSAPQPEDNWGWSDSETSEESAQSPGKGSDGLASSATLVQSMVKNLEKQLETPAKKPSGGVNMFLRPNTALQRSSTPARKTQLSEDESDLEISSLEDLSHDLGPKGKPTPLSHSKLPEKFDASPWSSGSRPRIPGW.

The C2H2-type zinc-finger motif lies at 166-189; that stretch reads HTCHLCDKTFMNATFLRGHIQRRH. Positions 196–450 form a coiled coil; that stretch reads GKQKQEQQLG…RKVLAALRNN (255 aa). 2 positions are modified to phosphoserine: S425 and S426. Positions 520–776 are disordered; the sequence is SRAKKRWEGT…SGSRPRIPGW (257 aa). Positions 600-618 are enriched in low complexity; that stretch reads GPSSTPVSPGPGLSTPPFS. The span at 652–683 shows a compositional bias: polar residues; sequence WSDSETSEESAQSPGKGSDGLASSATLVQSMV. The span at 685 to 694 shows a compositional bias: basic and acidic residues; the sequence is NLEKQLETPA. A compositionally biased stretch (polar residues) spans 709–721; that stretch reads TALQRSSTPARKT.

Belongs to the DZIP C2H2-type zinc-finger protein family. As to quaternary structure, interacts with SEPTIN2.

It localises to the cytoplasm. It is found in the cytoskeleton. The protein localises to the cilium basal body. Its subcellular location is the microtubule organizing center. The protein resides in the centrosome. It localises to the centriole. Its function is as follows. Involved in primary cilium formation. Probably acts as a transition zone protein required for localization of PKD1/PC1 and PKD2/PC2 to the ciliary membrane. This chain is Cilium assembly protein DZIP1L, found in Rattus norvegicus (Rat).